The following is a 77-amino-acid chain: Acyl carrier protein (77 aa).

The Carrier domain occupies 2–77 (SDIEQRVKNV…LAIDYVKSHQ (76 aa)). Ser-37 carries the O-(pantetheine 4'-phosphoryl)serine modification.

The protein belongs to the acyl carrier protein (ACP) family. Post-translationally, 4'-phosphopantetheine is transferred from CoA to a specific serine of apo-ACP by AcpS. This modification is essential for activity because fatty acids are bound in thioester linkage to the sulfhydryl of the prosthetic group.

Its subcellular location is the cytoplasm. Its pathway is lipid metabolism; fatty acid biosynthesis. In terms of biological role, carrier of the growing fatty acid chain in fatty acid biosynthesis. This Leucothrix mucor protein is Acyl carrier protein.